Consider the following 529-residue polypeptide: Autophagy-related protein 21 (529 aa).

Positions 49 to 62 (NSLEDSAGCQNPTH) are enriched in polar residues. The interval 49-70 (NSLEDSAGCQNPTHSKTDSQDT) is disordered. WD repeat units follow at residues 271–311 (AHHS…GKVK) and 321–361 (GHNL…SDIC). The L/FRRG motif motif lies at 318–322 (LRRGH). The disordered stretch occupies residues 362–388 (TNENSEDRTNHNSDYEDSDGDTSKSSE). Over residues 366 to 375 (SEDRTNHNSD) the composition is skewed to basic and acidic residues.

The protein belongs to the WD repeat PROPPIN family.

The protein resides in the cytoplasm. It is found in the membrane. The protein localises to the vacuole membrane. In terms of biological role, required for cytoplasm to vacuole transport (Cvt) vesicles formation and mitophagy. Involved in binding of phosphatidylethanolamine to ATG8 and in recruitment of ATG8 and ATG5 to the pre-autophagosomal structure. Protects ATG8 from ARG4-mediated cleavage. This chain is Autophagy-related protein 21 (ATG21), found in Candida albicans (strain SC5314 / ATCC MYA-2876) (Yeast).